We begin with the raw amino-acid sequence, 696 residues long: Methionine synthase reductase (696 aa).

Residues 4–147 form the Flavodoxin-like domain; it reads FLLLYATQRG…VVEPWIDGLW (144 aa). FMN is bound by residues 10–14 and 93–124; these read TQRGQ and LLGL…QRFY. Positions 166–245 are hinge; sequence TLSRASDAPL…SSLSIPAVPP (80 aa). Residues S171 and S188 each carry the phosphoserine modification. One can recognise an FAD-binding FR-type domain in the interval 269–531; that stretch reads DPSFQVPISK…PRATNAFHLP (263 aa). Residue K289 participates in NADP(+) binding. FAD contacts are provided by residues 449 to 452 and 485 to 488; these read RPYS and GVCT. Residues 608 to 609, 622 to 624, and D657 contribute to the NADP(+) site; these read SR and YVQ. FAD is bound at residue W695.

Forms a multiprotein complex with MMACHC, MMADHC and MTR. Requires FAD as cofactor. The cofactor is FMN.

The protein localises to the cytoplasm. The catalysed reaction is 2 methylcob(III)alamin-[methionine synthase] + 2 S-adenosyl-L-homocysteine + NADP(+) + H(+) = 2 cob(II)alamin-[methionine synthase] + 2 S-adenosyl-L-methionine + NADPH. It carries out the reaction 2 cob(II)alamin + A + 2 H2O + 2 H(+) = 2 aquacob(III)alamin + AH2. Its function is as follows. Key enzyme in methionine and folate homeostasis responsible for the reactivation of methionine synthase (MTR/MS) activity by catalyzing the reductive methylation of MTR-bound cob(II)alamin. Cobalamin (vitamin B12) forms a complex with MTR to serve as an intermediary in methyl transfer reactions that cycles between MTR-bound methylcob(III)alamin and MTR bound-cob(I)alamin forms, and occasional oxidative escape of the cob(I)alamin intermediate during the catalytic cycle leads to the inactive cob(II)alamin species. The processing of cobalamin in the cytosol occurs in a multiprotein complex composed of at least MMACHC, MMADHC, MTRR and MTR which may contribute to shuttle safely and efficiently cobalamin towards MTR in order to produce methionine. Also necessary for the utilization of methyl groups from the folate cycle, thereby affecting transgenerational epigenetic inheritance. Also acts as a molecular chaperone for methionine synthase by stabilizing apoMTR and incorporating methylcob(III)alamin into apoMTR to form the holoenzyme. Also serves as an aquacob(III)alamin reductase by reducing aquacob(III)alamin to cob(II)alamin; this reduction leads to stimulation of the conversion of apoMTR and aquacob(III)alamin to MTR holoenzyme. The polypeptide is Methionine synthase reductase (Mus musculus (Mouse)).